The sequence spans 337 residues: Ketol-acid reductoisomerase (NADP(+)) (337 aa).

In terms of domain architecture, KARI N-terminal Rossmann spans 3–183; that stretch reads IDVFYDDDAD…GGGRAGVIPT (181 aa). Residues 26 to 29, R49, S52, S54, and 84 to 87 contribute to the NADP(+) site; these read YGSQ and DTSQ. H109 is a catalytic residue. G135 serves as a coordination point for NADP(+). The 146-residue stretch at 184–329 folds into the KARI C-terminal knotted domain; it reads TFEAETVTDL…EKLRDLMSWV (146 aa). The Mg(2+) site is built by D192, E196, E228, and E232. A substrate-binding site is contributed by S253.

This sequence belongs to the ketol-acid reductoisomerase family. Requires Mg(2+) as cofactor.

It carries out the reaction (2R)-2,3-dihydroxy-3-methylbutanoate + NADP(+) = (2S)-2-acetolactate + NADPH + H(+). The enzyme catalyses (2R,3R)-2,3-dihydroxy-3-methylpentanoate + NADP(+) = (S)-2-ethyl-2-hydroxy-3-oxobutanoate + NADPH + H(+). Its pathway is amino-acid biosynthesis; L-isoleucine biosynthesis; L-isoleucine from 2-oxobutanoate: step 2/4. The protein operates within amino-acid biosynthesis; L-valine biosynthesis; L-valine from pyruvate: step 2/4. Its function is as follows. Involved in the biosynthesis of branched-chain amino acids (BCAA). Catalyzes an alkyl-migration followed by a ketol-acid reduction of (S)-2-acetolactate (S2AL) to yield (R)-2,3-dihydroxy-isovalerate. In the isomerase reaction, S2AL is rearranged via a Mg-dependent methyl migration to produce 3-hydroxy-3-methyl-2-ketobutyrate (HMKB). In the reductase reaction, this 2-ketoacid undergoes a metal-dependent reduction by NADPH to yield (R)-2,3-dihydroxy-isovalerate. The sequence is that of Ketol-acid reductoisomerase (NADP(+)) from Corynebacterium urealyticum (strain ATCC 43042 / DSM 7109).